Here is a 495-residue protein sequence, read N- to C-terminus: 3-octaprenyl-4-hydroxybenzoate carboxy-lyase (495 aa).

Asn172 serves as a coordination point for Mn(2+). Prenylated FMN is bound by residues 175–177 (IYR), 189–191 (RWL), and 194–195 (RG). Glu238 lines the Mn(2+) pocket. The active-site Proton donor is the Asp287.

The protein belongs to the UbiD family. As to quaternary structure, homohexamer. The cofactor is prenylated FMN. Mn(2+) serves as cofactor.

Its subcellular location is the cell membrane. The catalysed reaction is a 4-hydroxy-3-(all-trans-polyprenyl)benzoate + H(+) = a 2-(all-trans-polyprenyl)phenol + CO2. It functions in the pathway cofactor biosynthesis; ubiquinone biosynthesis. Functionally, catalyzes the decarboxylation of 3-octaprenyl-4-hydroxy benzoate to 2-octaprenylphenol, an intermediate step in ubiquinone biosynthesis. The chain is 3-octaprenyl-4-hydroxybenzoate carboxy-lyase from Yersinia enterocolitica serotype O:8 / biotype 1B (strain NCTC 13174 / 8081).